The chain runs to 99 residues: Indole-3-acetic acid-induced protein ARG2 (99 aa).

Residues 40–62 (RGGASIGGNMVPKSGEEKVRGGE) are disordered. The segment covering 53 to 62 (SGEEKVRGGE) has biased composition (basic and acidic residues).

This is Indole-3-acetic acid-induced protein ARG2 (ARG2) from Vigna radiata var. radiata (Mung bean).